The sequence spans 152 residues: Large ribosomal subunit protein uL15 (152 aa).

Positions 18–37 (RVARGIGSGKGKTAGRGVKG) are disordered. Over residues 23-35 (IGSGKGKTAGRGV) the composition is skewed to gly residues.

Belongs to the universal ribosomal protein uL15 family. As to quaternary structure, part of the 50S ribosomal subunit.

Binds to the 23S rRNA. The polypeptide is Large ribosomal subunit protein uL15 (Rickettsia bellii (strain OSU 85-389)).